The following is a 138-amino-acid chain: MMAEPWQALQLLLAILLTLMALPYQARKKTFLSVHEVMAVENYAKDSLQWITDQYNKESDDKYHFRIFRVLKVQRQVTDHLEYHLNVEMQWTTCQKPETTNCVPQERELHKQVNCFFSVFAVPWFEQYKILNKSCSSD.

The first 26 residues, 1-26 (MMAEPWQALQLLLAILLTLMALPYQA), serve as a signal peptide directing secretion. 2 disulfide bridges follow: Cys-94/Cys-102 and Cys-115/Cys-135. Asn-132 carries N-linked (GlcNAc...) asparagine glycosylation.

This sequence belongs to the cystatin family. As to expression, detected in the epithelium and lumen of the epididymis, and in sperm (at protein level).

Its subcellular location is the secreted. Has antibacterial activity against the Gram-negative bacteria E.coli. May play a role in sperm maturation and fertilization. The chain is Cystatin-11 (CST11) from Homo sapiens (Human).